Here is a 366-residue protein sequence, read N- to C-terminus: Peptide chain release factor 2 (366 aa).

Residue Q251 is modified to N5-methylglutamine.

This sequence belongs to the prokaryotic/mitochondrial release factor family. In terms of processing, methylated by PrmC. Methylation increases the termination efficiency of RF2.

It is found in the cytoplasm. Peptide chain release factor 2 directs the termination of translation in response to the peptide chain termination codons UGA and UAA. This chain is Peptide chain release factor 2 (prfB), found in Listeria innocua serovar 6a (strain ATCC BAA-680 / CLIP 11262).